A 223-amino-acid chain; its full sequence is Noggin-3 (223 aa).

Residues 1–23 form the signal peptide; sequence MDNIPYFLATVLIFSLGFRIEEG. N-linked (GlcNAc...) asparagine glycosylation is found at Asn60 and Asn93.

The protein belongs to the noggin family. In terms of assembly, homodimer; disulfide-linked.

It is found in the secreted. In terms of biological role, may function as an inhibitor of bone morphogenetic proteins (BMP) signaling during later stages of development including late phases of dorsoventral patterning, to refine the early pattern set up by the interaction of chordino and BMP2/4. Not involved in organizer function or early phases of dorsoventral pattern formation. This chain is Noggin-3 (nog3), found in Danio rerio (Zebrafish).